The following is a 192-amino-acid chain: UPF0312 protein YE1254 (192 aa).

The N-terminal stretch at methionine 1 to alanine 23 is a signal peptide.

The protein belongs to the UPF0312 family. Type 1 subfamily.

It localises to the periplasm. The protein is UPF0312 protein YE1254 of Yersinia enterocolitica serotype O:8 / biotype 1B (strain NCTC 13174 / 8081).